Consider the following 898-residue polypeptide: Translation initiation factor IF-2 (898 aa).

A disordered region spans residues 51–302; the sequence is KEHGDATGSE…RKGRINKPMS (252 aa). Composition is skewed to basic and acidic residues over residues 100 to 164 and 171 to 230; these read SSVE…KRET and RSDE…KETV. The segment covering 234–245 has biased composition (polar residues); that stretch reads QENTDYHVTTSR. Residues 263–273 are compositionally biased toward basic residues; the sequence is RRSTKANKRKM. A compositionally biased stretch (basic and acidic residues) spans 274–286; it reads SSRDDNQERDSRP. Basic residues predominate over residues 287 to 297; it reads RGGKAGRKGRI. Positions 397-566 constitute a tr-type G domain; it reads SRAPVVTIMG…LLQAEVLELK (170 aa). Residues 406-413 form a G1 region; sequence GHVDHGKT. 406–413 is a binding site for GTP; that stretch reads GHVDHGKT. The segment at 431-435 is G2; sequence GITQH. The tract at residues 452-455 is G3; the sequence is DTPG. GTP contacts are provided by residues 452–456 and 506–509; these read DTPGH and NKID. Residues 506 to 509 are G4; sequence NKID. Positions 542-544 are G5; it reads SAK.

It belongs to the TRAFAC class translation factor GTPase superfamily. Classic translation factor GTPase family. IF-2 subfamily.

The protein resides in the cytoplasm. Functionally, one of the essential components for the initiation of protein synthesis. Protects formylmethionyl-tRNA from spontaneous hydrolysis and promotes its binding to the 30S ribosomal subunits. Also involved in the hydrolysis of GTP during the formation of the 70S ribosomal complex. The sequence is that of Translation initiation factor IF-2 from Vibrio cholerae serotype O1 (strain ATCC 39541 / Classical Ogawa 395 / O395).